Reading from the N-terminus, the 179-residue chain is NADH-quinone oxidoreductase subunit I (179 aa).

4Fe-4S ferredoxin-type domains follow at residues 49–79 (LTRD…LQKG) and 89–118 (EFFR…LTPD). 8 residues coordinate [4Fe-4S] cluster: Cys59, Cys62, Cys65, Cys69, Cys98, Cys101, Cys104, and Cys108.

Belongs to the complex I 23 kDa subunit family. As to quaternary structure, NDH-1 is composed of 14 different subunits. Subunits NuoA, H, J, K, L, M, N constitute the membrane sector of the complex. [4Fe-4S] cluster serves as cofactor.

Its subcellular location is the cell inner membrane. The enzyme catalyses a quinone + NADH + 5 H(+)(in) = a quinol + NAD(+) + 4 H(+)(out). Functionally, NDH-1 shuttles electrons from NADH, via FMN and iron-sulfur (Fe-S) centers, to quinones in the respiratory chain. The immediate electron acceptor for the enzyme in this species is believed to be ubiquinone. Couples the redox reaction to proton translocation (for every two electrons transferred, four hydrogen ions are translocated across the cytoplasmic membrane), and thus conserves the redox energy in a proton gradient. This Chromohalobacter salexigens (strain ATCC BAA-138 / DSM 3043 / CIP 106854 / NCIMB 13768 / 1H11) protein is NADH-quinone oxidoreductase subunit I.